The chain runs to 159 residues: Lipoprotein LpqH (159 aa).

The signal sequence occupies residues methionine 1–glycine 21. Cysteine 22 carries the N-palmitoyl cysteine lipid modification. Residue cysteine 22 is the site of S-diacylglycerol cysteine attachment. Positions serine 24 to lysine 51 are disordered. Low complexity predominate over residues serine 27–glycine 49.

This sequence belongs to the mycobacterial 19 kDa antigen family. Modified by Lgt on Cys-22 with an S-linked diacylglycerol with a mixture of C16, C18 and C19 fatty acids, signal peptide is removed by LspA, modifed by Lnt with an amide-linked mixture of C16 and C19 fatty acids.

The protein resides in the cell membrane. Its function is as follows. Might be involved in ligand transport. A host TLR2 agonist, modifies host gene expression in response to pathogen. The chain is Lipoprotein LpqH (lpqH) from Mycobacterium bovis (strain ATCC BAA-935 / AF2122/97).